The primary structure comprises 313 residues: Probable cell division protein WhiA (313 aa).

Positions 274 to 308 form a DNA-binding region, H-T-H motif; the sequence is SLKELGELVPGGPISKSGVNHRLRKLNAYADELRA.

Belongs to the WhiA family.

Involved in cell division and chromosome segregation. This chain is Probable cell division protein WhiA, found in Limosilactobacillus reuteri subsp. reuteri (strain JCM 1112) (Lactobacillus reuteri).